The chain runs to 255 residues: Superoxide dismutase [Fe] 2, chloroplastic (255 aa).

The N-terminal 32 residues, 1-32, are a transit peptide targeting the chloroplast; that stretch reads MAAFASALRVLPSPPAAVPRRLRSREQRQGCR. His-67, His-119, Asp-203, and His-207 together coordinate Fe cation.

This sequence belongs to the iron/manganese superoxide dismutase family. As to quaternary structure, homodimer. Fe cation is required as a cofactor. In terms of tissue distribution, strongly expressed in the stems of the young seedlings, etiolated seedlings and embryogenic calli, but only minimally expressed in the leaves and the roots.

It localises to the plastid. The protein localises to the chloroplast. It carries out the reaction 2 superoxide + 2 H(+) = H2O2 + O2. Functionally, destroys superoxide anion radicals which are normally produced within the cells and which are toxic to biological systems. This Oryza sativa subsp. japonica (Rice) protein is Superoxide dismutase [Fe] 2, chloroplastic.